The primary structure comprises 355 residues: Neutral protease 2 homolog MEP6 (355 aa).

The signal sequence occupies residues 1–19 (MRLSSSLIALVALAGQALA). Positions 20–179 (LPFNELAERD…ASAIPELNKR (160 aa)) are excised as a propeptide. Cystine bridges form between cysteine 187/cysteine 259 and cysteine 266/cysteine 283. Histidine 307 is a binding site for Zn(2+). Glutamate 308 is an active-site residue. Zn(2+)-binding residues include histidine 311 and aspartate 322.

It belongs to the peptidase M35 family. Requires Zn(2+) as cofactor.

Its subcellular location is the secreted. It catalyses the reaction Preferential cleavage of bonds with hydrophobic residues in P1'. Also 3-Asn-|-Gln-4 and 8-Gly-|-Ser-9 bonds in insulin B chain.. Functionally, secreted metalloproteinase that allows assimilation of proteinaceous substrates. Shows high activities on basic nuclear substrates such as histone and protamine. May be involved in virulence. The chain is Neutral protease 2 homolog MEP6 (MEP6) from Coccidioides posadasii (strain C735) (Valley fever fungus).